The following is a 312-amino-acid chain: Glyoxylate/hydroxypyruvate reductase A (312 aa).

The active site involves Arg-227. Catalysis depends on His-275, which acts as the Proton donor.

It belongs to the D-isomer specific 2-hydroxyacid dehydrogenase family. GhrA subfamily.

It is found in the cytoplasm. It catalyses the reaction glycolate + NADP(+) = glyoxylate + NADPH + H(+). The enzyme catalyses (R)-glycerate + NAD(+) = 3-hydroxypyruvate + NADH + H(+). It carries out the reaction (R)-glycerate + NADP(+) = 3-hydroxypyruvate + NADPH + H(+). Functionally, catalyzes the NADPH-dependent reduction of glyoxylate and hydroxypyruvate into glycolate and glycerate, respectively. In Salmonella enteritidis PT4 (strain P125109), this protein is Glyoxylate/hydroxypyruvate reductase A.